Here is a 223-residue protein sequence, read N- to C-terminus: MKKQILIVAAQSILCSTVFGERSNVGLSTEELGGDSILYFNEDPIVIEIDKKAIDKKTLEQLASTRDVVLTDLPDTLEFIDFNEYAKMKSKSDMLLEYINEYEFDDFERSSEGGLEEEEEEDLIYDFNAQAEDLGKLGSNIYEVVEEKNIVNTYDGNLINASTTESTTTIRPFVTSHSYVASSTPYSNISSLNEDYDNASNFLTPTTVALAVLLTILLFIQAY.

The first 20 residues, 1–20 (MKKQILIVAAQSILCSTVFG), serve as a signal peptide directing secretion. Asn198 is lipidated: GPI-anchor amidated asparagine. A propeptide spans 199-223 (ASNFLTPTTVALAVLLTILLFIQAY) (removed in mature form).

Post-translationally, the GPI-anchor is attached to the protein in the endoplasmic reticulum and serves to target the protein to the cell surface. There, the glucosamine-inositol phospholipid moiety is cleaved off and the GPI-modified mannoprotein is covalently attached via its lipidless GPI glycan remnant to the 1,6-beta-glucan of the outer cell wall layer.

Its subcellular location is the secreted. It localises to the cell wall. The protein resides in the membrane. Functionally, involved in sporulation. Essential for completion of the nuclear division. The protein is Sporulation-specific protein 19 (SPO19) of Saccharomyces cerevisiae (strain ATCC 204508 / S288c) (Baker's yeast).